Consider the following 382-residue polypeptide: Alkanesulfonate monooxygenase (382 aa).

The protein belongs to the SsuD family. As to quaternary structure, homotetramer.

It catalyses the reaction an alkanesulfonate + FMNH2 + O2 = an aldehyde + FMN + sulfite + H2O + 2 H(+). In terms of biological role, catalyzes the desulfonation of aliphatic sulfonates. The polypeptide is Alkanesulfonate monooxygenase (Serratia proteamaculans (strain 568)).